The primary structure comprises 365 residues: DNA replication and repair protein RecF (365 aa).

30-37 serves as a coordination point for ATP; the sequence is GQNGSGKT.

Belongs to the RecF family.

The protein localises to the cytoplasm. The RecF protein is involved in DNA metabolism; it is required for DNA replication and normal SOS inducibility. RecF binds preferentially to single-stranded, linear DNA. It also seems to bind ATP. The polypeptide is DNA replication and repair protein RecF (Shewanella halifaxensis (strain HAW-EB4)).